Reading from the N-terminus, the 389-residue chain is Flap endonuclease 1 (389 aa).

Residues 1–105 (MGIKGLNKLL…GELAKRKERR (105 aa)) are N-domain. Asp34 serves as a coordination point for Mg(2+). Residues Arg47 and Arg71 each contribute to the DNA site. 5 residues coordinate Mg(2+): Asp87, Glu170, Glu172, Asp191, and Asp193. Residues 134–265 (DVTRFEKRTV…QTALKLMKEH (132 aa)) are I-domain. Glu170 is a DNA binding site. Residues Gly243 and Asp245 each coordinate DNA. Asp245 serves as a coordination point for Mg(2+). Positions 351–359 (PQARLDGFF) are interaction with PCNA. The tract at residues 360 to 389 (KVMPKEGGEKRKADDKKTKGKKPATKKAKK) is disordered. Positions 362-376 (MPKEGGEKRKADDKK) are enriched in basic and acidic residues. Residues 377–389 (TKGKKPATKKAKK) show a composition bias toward basic residues.

It belongs to the XPG/RAD2 endonuclease family. FEN1 subfamily. In terms of assembly, interacts with PCNA. Three molecules of FEN1 bind to one PCNA trimer with each molecule binding to one PCNA monomer. PCNA stimulates the nuclease activity without altering cleavage specificity. It depends on Mg(2+) as a cofactor. Post-translationally, phosphorylated. Phosphorylation upon DNA damage induces relocalization to the nuclear plasma.

The protein resides in the nucleus. Its subcellular location is the nucleolus. It localises to the nucleoplasm. The protein localises to the mitochondrion. Functionally, structure-specific nuclease with 5'-flap endonuclease and 5'-3' exonuclease activities involved in DNA replication and repair. During DNA replication, cleaves the 5'-overhanging flap structure that is generated by displacement synthesis when DNA polymerase encounters the 5'-end of a downstream Okazaki fragment. It enters the flap from the 5'-end and then tracks to cleave the flap base, leaving a nick for ligation. Also involved in the long patch base excision repair (LP-BER) pathway, by cleaving within the apurinic/apyrimidinic (AP) site-terminated flap. Acts as a genome stabilization factor that prevents flaps from equilibrating into structures that lead to duplications and deletions. Also possesses 5'-3' exonuclease activity on nicked or gapped double-stranded DNA, and exhibits RNase H activity. Also involved in replication and repair of rDNA and in repairing mitochondrial DNA. In Yarrowia lipolytica (strain CLIB 122 / E 150) (Yeast), this protein is Flap endonuclease 1.